The chain runs to 201 residues: MAIGYPNGKKYAASHEVLPQQKRKAPVTYGKRGMSLEDDLNDTIAYYLTHEIAVIHKKPTPVQIVSVDYPKRSSAKIKEAYFKTPSTTDYNGVYKGKYVDFEAKETQNTTSFPLSNFHDHQMTHMANVLKQDGIVFVIIAFQKLGETHFIPFEKFYPFWERMQSGGRKSVTIAEIQDVSDQIPYGLNPRLDFLQSIDKLYF.

Residues Thr-87, Asp-89, Glu-102, and Gln-121 each contribute to the Mg(2+) site.

The protein belongs to the RecU family. It depends on Mg(2+) as a cofactor.

It localises to the cytoplasm. It catalyses the reaction Endonucleolytic cleavage at a junction such as a reciprocal single-stranded crossover between two homologous DNA duplexes (Holliday junction).. Endonuclease that resolves Holliday junction intermediates in genetic recombination. Cleaves mobile four-strand junctions by introducing symmetrical nicks in paired strands. Promotes annealing of linear ssDNA with homologous dsDNA. Required for DNA repair, homologous recombination and chromosome segregation. The polypeptide is Holliday junction resolvase RecU (Listeria monocytogenes serotype 4b (strain F2365)).